Reading from the N-terminus, the 665-residue chain is ELMO family protein LMO1 (665 aa).

As to quaternary structure, forms an active heterodimer with DCK1.

The protein resides in the cytoplasm. The protein localises to the mitochondrion. In terms of biological role, forms a transiant heterodimeric complex with DCK1, that acts as a guanine nucleotide exchange factor (GEF) for the small GTPase RHO5. DCK1, LMO1 and RHO5 relocate to mitochondria upon oxidative stress and trigger cell death. The DCK1/LMO1/RHO5 signaling module mediates mitochondrial turnover under nitrogen starvation conditions via mitophagy. The DCK1/LMO1/RHO5 signaling module also plays a role in cell wall integrity signaling. The protein is ELMO family protein LMO1 of Saccharomyces cerevisiae (strain ATCC 204508 / S288c) (Baker's yeast).